Here is a 140-residue protein sequence, read N- to C-terminus: Protein E6 (140 aa).

2 zinc fingers span residues Cys-28 to Cys-64 and Cys-101 to Cys-137.

Belongs to the papillomaviridae E6 protein family. In terms of assembly, forms homodimers. Interacts with ubiquitin-protein ligase UBE3A/E6-AP; this interaction stimulates UBE3A ubiquitin activity. Interacts with host BAK1.

The protein localises to the host cytoplasm. Its subcellular location is the host nucleus. Its function is as follows. Plays a major role in the induction and maintenance of cellular transformation. E6 associates with host UBE3A/E6-AP ubiquitin-protein ligase and modulates its activity. Protects host keratinocytes from apoptosis by mediating the degradation of host BAK1. May also inhibit host immune response. In Human papillomavirus 24, this protein is Protein E6.